A 227-amino-acid polypeptide reads, in one-letter code: Translation initiation factor 6 (227 aa).

The protein belongs to the eIF-6 family.

Functionally, binds to the 50S ribosomal subunit and prevents its association with the 30S ribosomal subunit to form the 70S initiation complex. The protein is Translation initiation factor 6 of Methanococcus maripaludis (strain DSM 14266 / JCM 13030 / NBRC 101832 / S2 / LL).